The primary structure comprises 1503 residues: DNA-directed RNA polymerase subunit beta' (1503 aa).

Residues Cys-60, Cys-62, Cys-75, and Cys-78 each coordinate Zn(2+). 3 residues coordinate Mg(2+): Asp-626, Asp-628, and Asp-630. Zn(2+) is bound by residues Cys-1002, Cys-1075, Cys-1082, and Cys-1085. The segment at 1439-1503 is disordered; it reads EESQQAEEAP…EEEDNDLPAF (65 aa). Residues 1486-1503 are compositionally biased toward acidic residues; the sequence is GDNDQSDAEEEDNDLPAF.

Belongs to the RNA polymerase beta' chain family. In terms of assembly, the RNAP catalytic core consists of 2 alpha, 1 beta, 1 beta' and 1 omega subunit. When a sigma factor is associated with the core the holoenzyme is formed, which can initiate transcription. Mg(2+) serves as cofactor. Zn(2+) is required as a cofactor.

It catalyses the reaction RNA(n) + a ribonucleoside 5'-triphosphate = RNA(n+1) + diphosphate. Its function is as follows. DNA-dependent RNA polymerase catalyzes the transcription of DNA into RNA using the four ribonucleoside triphosphates as substrates. The sequence is that of DNA-directed RNA polymerase subunit beta' from Chloroflexus aurantiacus (strain ATCC 29364 / DSM 637 / Y-400-fl).